A 700-amino-acid polypeptide reads, in one-letter code: Long chain acyl-CoA synthetase 7, peroxisomal (700 aa).

The disordered stretch occupies residues M1 to S29. The segment covering E7 to I18 has biased composition (basic and acidic residues). The Microbody targeting signal signature appears at R10–I18. Over residues D19–S29 the composition is skewed to polar residues. I266–K277 lines the ATP pocket. Positions D526–K550 are fatty acid-binding. A Microbody targeting signal motif is present at residues S698–L700.

Belongs to the ATP-dependent AMP-binding enzyme family. As to quaternary structure, interacts with PEX5. Mg(2+) is required as a cofactor. As to expression, expressed in roots, stems, leaves flowers and germinating seedling. Preferentially expressed in seeds.

The protein localises to the peroxisome. The catalysed reaction is a long-chain fatty acid + ATP + CoA = a long-chain fatty acyl-CoA + AMP + diphosphate. It carries out the reaction decanoate + ATP + CoA = decanoyl-CoA + AMP + diphosphate. The enzyme catalyses dodecanoate + ATP + CoA = dodecanoyl-CoA + AMP + diphosphate. It catalyses the reaction tetradecanoate + ATP + CoA = tetradecanoyl-CoA + AMP + diphosphate. The catalysed reaction is hexadecanoate + ATP + CoA = hexadecanoyl-CoA + AMP + diphosphate. It carries out the reaction (9Z)-octadecenoate + ATP + CoA = (9Z)-octadecenoyl-CoA + AMP + diphosphate. The enzyme catalyses (9Z,12Z)-octadecadienoate + ATP + CoA = (9Z,12Z)-octadecadienoyl-CoA + AMP + diphosphate. It catalyses the reaction (9Z,12Z,15Z)-octadecatrienoate + ATP + CoA = (9Z,12Z,15Z)-octadecatrienoyl-CoA + AMP + diphosphate. Its pathway is lipid metabolism; fatty acid metabolism. Its function is as follows. Activation of long-chain fatty acids for both synthesis of cellular lipids, and degradation via beta-oxidation. Preferentially uses palmitate, palmitoleate, oleate, linoleate and eicosenoate as substrates. Can use myristate and linolenate as substrates. Functions redundantly with LACS6 in lipid mobilization for beta-oxidation during seed germination, which is essential for postgerminative growth and seedling establishment. The sequence is that of Long chain acyl-CoA synthetase 7, peroxisomal from Arabidopsis thaliana (Mouse-ear cress).